We begin with the raw amino-acid sequence, 804 residues long: Leucine--tRNA ligase (804 aa).

Positions 40–51 match the 'HIGH' region motif; sequence PYPSGAGLHVGH. The 'KMSKS' region motif lies at 576–580; the sequence is KMSKS. ATP is bound at residue Lys-579.

It belongs to the class-I aminoacyl-tRNA synthetase family.

The protein localises to the cytoplasm. It catalyses the reaction tRNA(Leu) + L-leucine + ATP = L-leucyl-tRNA(Leu) + AMP + diphosphate. This chain is Leucine--tRNA ligase, found in Bacillus velezensis (strain DSM 23117 / BGSC 10A6 / LMG 26770 / FZB42) (Bacillus amyloliquefaciens subsp. plantarum).